The sequence spans 196 residues: Recombination protein RecR (196 aa).

Residues C57–C72 form a C4-type zinc finger. A Toprim domain is found at T80–P175.

It belongs to the RecR family.

In terms of biological role, may play a role in DNA repair. It seems to be involved in an RecBC-independent recombinational process of DNA repair. It may act with RecF and RecO. This is Recombination protein RecR from Acidovorax sp. (strain JS42).